A 273-amino-acid chain; its full sequence is 4-hydroxy-tetrahydrodipicolinate reductase (273 aa).

Residues 8-13 (GALGRM), Asp-35, 103-105 (GTT), and 129-132 (SQNY) contribute to the NAD(+) site. His-161 acts as the Proton donor/acceptor in catalysis. His-162 lines the (S)-2,3,4,5-tetrahydrodipicolinate pocket. Residue Lys-165 is the Proton donor of the active site. 171 to 172 (GT) is a binding site for (S)-2,3,4,5-tetrahydrodipicolinate.

It belongs to the DapB family.

It localises to the cytoplasm. The enzyme catalyses (S)-2,3,4,5-tetrahydrodipicolinate + NAD(+) + H2O = (2S,4S)-4-hydroxy-2,3,4,5-tetrahydrodipicolinate + NADH + H(+). It catalyses the reaction (S)-2,3,4,5-tetrahydrodipicolinate + NADP(+) + H2O = (2S,4S)-4-hydroxy-2,3,4,5-tetrahydrodipicolinate + NADPH + H(+). It functions in the pathway amino-acid biosynthesis; L-lysine biosynthesis via DAP pathway; (S)-tetrahydrodipicolinate from L-aspartate: step 4/4. Its function is as follows. Catalyzes the conversion of 4-hydroxy-tetrahydrodipicolinate (HTPA) to tetrahydrodipicolinate. The protein is 4-hydroxy-tetrahydrodipicolinate reductase of Methanococcus aeolicus (strain ATCC BAA-1280 / DSM 17508 / OCM 812 / Nankai-3).